The sequence spans 221 residues: Tetraspanin-2 (221 aa).

Residues 1–13 lie on the Cytoplasmic side of the membrane; the sequence is MGRFRGGLRCIKY. The helical transmembrane segment at 14-34 threads the bilayer; it reads LLLGFNLLFWLAGSAVIAFGL. Residues 35 to 54 are Extracellular-facing; it reads WFRFGGTIKDLSSEEKSPEY. The chain crosses the membrane as a helical span at residues 55–75; the sequence is FYVGLYVLVGAGALMMAVGFF. The Cytoplasmic segment spans residues 76 to 90; that stretch reads GCCGAMRESQCVLGS. The helical transmembrane segment at 91 to 111 threads the bilayer; the sequence is FFTCLLVIFAAEVTTGVFAFI. Topologically, residues 112–188 are extracellular; that stretch reads GKDVAIRHVQ…ETIISVKLQL (77 aa). Residue Asn-139 is glycosylated (N-linked (GlcNAc...) asparagine). Residues 189 to 209 form a helical membrane-spanning segment; sequence IGIVGIGIAGLTIFGMIFSMV. The Cytoplasmic portion of the chain corresponds to 210-221; it reads LCCAIRNSRDVI.

It belongs to the tetraspanin (TM4SF) family. As to expression, expression is restricted to the nervous system.

The protein localises to the membrane. Its function is as follows. May play a role in signalling in oligodendrocytes in the early stages of their terminal differentiation into myelin-forming glia and may also function in stabilizing the mature sheath. The protein is Tetraspanin-2 (Tspan2) of Rattus norvegicus (Rat).